A 465-amino-acid chain; its full sequence is GTPase Der (465 aa).

EngA-type G domains lie at 3–166 (FLVA…LNEF) and 184–358 (IHFS…ACAN). GTP is bound by residues 9–16 (GRANVGKS), 56–60 (DTGGI), 118–121 (NKVD), 190–197 (GRPNVGKS), 237–241 (DTAGV), and 302–305 (NKWD). One can recognise a KH-like domain in the interval 359-443 (KKITTADATR…PIVFEFKQSE (85 aa)).

This sequence belongs to the TRAFAC class TrmE-Era-EngA-EngB-Septin-like GTPase superfamily. EngA (Der) GTPase family. In terms of assembly, associates with the 50S ribosomal subunit.

In terms of biological role, GTPase that plays an essential role in the late steps of ribosome biogenesis. This is GTPase Der from Francisella philomiragia subsp. philomiragia (strain ATCC 25017 / CCUG 19701 / FSC 153 / O#319-036).